We begin with the raw amino-acid sequence, 400 residues long: Aminomethyltransferase, mitochondrial (400 aa).

Positions 221, 250, and 397 each coordinate substrate.

It belongs to the GcvT family. Component of the glycine decarboxylase complex (GDC), which is composed of four proteins: P, T, L and H.

The protein localises to the mitochondrion. The catalysed reaction is N(6)-[(R)-S(8)-aminomethyldihydrolipoyl]-L-lysyl-[protein] + (6S)-5,6,7,8-tetrahydrofolate = N(6)-[(R)-dihydrolipoyl]-L-lysyl-[protein] + (6R)-5,10-methylene-5,6,7,8-tetrahydrofolate + NH4(+). Functionally, the glycine cleavage system (glycine decarboxylase complex) catalyzes the degradation of glycine. The chain is Aminomethyltransferase, mitochondrial (GCV1) from Saccharomyces cerevisiae (strain ATCC 204508 / S288c) (Baker's yeast).